A 145-amino-acid chain; its full sequence is Protoporphyrinogen IX oxidase (145 aa).

Helical transmembrane passes span 6-26 (LWFK…LLYL), 61-81 (AMIS…FVAL), 83-103 (TWFQ…GLLA), and 123-143 (IVNE…IVKP). Position 12 (His-12) interacts with heme. Lys-88 lines the heme pocket.

This sequence belongs to the HemJ family. Homodimer. The cofactor is heme b.

It localises to the cell membrane. The catalysed reaction is protoporphyrinogen IX + 3 A = protoporphyrin IX + 3 AH2. Its pathway is porphyrin-containing compound metabolism; protoporphyrin-IX biosynthesis; protoporphyrin-IX from protoporphyrinogen-IX: step 1/1. Catalyzes the oxidation of protoporphyrinogen IX to protoporphyrin IX. Is involved in the biosynthesis of tetrapyrrole molecules like heme. Does not use oxygen or artificial electron acceptors such as menadione or benzoquinone. This Rickettsia prowazekii (strain Madrid E) protein is Protoporphyrinogen IX oxidase.